A 1047-amino-acid chain; its full sequence is Atrial natriuretic peptide receptor 2 (1047 aa).

Residues 1–22 (MALPSLLLLVAALAGGVRPPGA) form the signal peptide. Residues 23-458 (RNLTLAVVLP…DKTPLSTLAI (436 aa)) are Extracellular-facing. N-linked (GlcNAc...) asparagine glycosylation is found at Asn-24 and Asn-35. A disulfide bridge links Cys-75 with Cys-101. Asn-161, Asn-195, Asn-244, Asn-277, and Asn-349 each carry an N-linked (GlcNAc...) asparagine glycan. A helical transmembrane segment spans residues 459 to 478 (VALGTGITFIMFGVSSFLIF). The Cytoplasmic segment spans residues 479 to 1047 (RKLMLEKELA…GERKGPPGLL (569 aa)). Ser-513 is modified (phosphoserine). The region spanning 513 to 786 (SRLTLSLRGS…PDFGQIKGFI (274 aa)) is the Protein kinase domain. A Phosphothreonine modification is found at Thr-516. 4 positions are modified to phosphoserine: Ser-518, Ser-522, Ser-523, and Ser-526. A Phosphothreonine modification is found at Thr-529. In terms of domain architecture, Guanylate cyclase spans 861–991 (TIYFSDIVGF…DTVNTASRME (131 aa)).

The protein belongs to the adenylyl cyclase class-4/guanylyl cyclase family. Phosphorylated. Phosphorylation of the protein kinase-like domain is required for full activation by CNP. In terms of processing, glycosylated.

The protein localises to the cell membrane. The catalysed reaction is GTP = 3',5'-cyclic GMP + diphosphate. Receptor for the C-type natriuretic peptide NPPC/CNP hormone. Has guanylate cyclase activity upon binding of its ligand. May play a role in the regulation of skeletal growth. The chain is Atrial natriuretic peptide receptor 2 (NPR2) from Homo sapiens (Human).